The sequence spans 329 residues: 2-oxoglutarate-dependent dioxygenase mpl2 (329 aa).

Positions P183 to G288 constitute a Fe2OG dioxygenase domain. H211, D213, and H269 together coordinate Fe cation. Position 279 (R279) interacts with 2-oxoglutarate.

This sequence belongs to the iron/ascorbate-dependent oxidoreductase family. The cofactor is Fe(2+).

The protein operates within mycotoxin biosynthesis. Its function is as follows. 2-oxoglutarate-dependent dioxygenase; part of the gene cluster that mediates the biosynthesis of the mycotoxin citrinin, a hepato-nephrotoxic compound to humans due to inhibition of respiration complex III. The pathway begins with the synthesis of a keto-aldehyde intermediate by the citrinin PKS (pksCT) from successive condensations of 4 malonyl-CoA units, presumably with a simple acetyl-CoA starter unit. Release of the keto-aldehyde intermediate is consistent with the presence of the C-terminal reductive release domain. Mp11 collaborates with pksCT by catalyzing the hydrolysis of ACP-bound acyl intermediates to free the ACP from stalled intermediates. Mpl2 then catalyzes the oxidation of the C-12 methyl of the ketone intermediate to an alcohol intermediate which is further oxidized by the oxidoreductase mpl7 to produce a bisaldehyde intermediate. The fourth catalytic step is catalyzed by the mpl4 aldehyde dehydrogenase. The final transformation is the reduction of C-3 by mpl6 to provide the chemically stable citrinin nucleus. The polypeptide is 2-oxoglutarate-dependent dioxygenase mpl2 (Monascus purpureus (Red mold)).